Here is a 115-residue protein sequence, read N- to C-terminus: SOSS complex subunit C homolog (115 aa).

This sequence belongs to the SOSS-C family.

In Drosophila mojavensis (Fruit fly), this protein is SOSS complex subunit C homolog.